Here is a 214-residue protein sequence, read N- to C-terminus: Pyridoxine/pyridoxamine 5'-phosphate oxidase (214 aa).

Substrate is bound by residues 9-12 (RREY) and Lys67. Residues 62 to 67 (RTVLLK), 77 to 78 (YS), Arg83, Lys84, and Gln106 contribute to the FMN site. Substrate contacts are provided by Tyr124, Arg128, and Ser132. FMN-binding positions include 141-142 (QS) and Trp186. 192–194 (RLH) contributes to the substrate binding site. FMN is bound at residue Arg196.

This sequence belongs to the pyridoxamine 5'-phosphate oxidase family. As to quaternary structure, homodimer. The cofactor is FMN.

The catalysed reaction is pyridoxamine 5'-phosphate + O2 + H2O = pyridoxal 5'-phosphate + H2O2 + NH4(+). The enzyme catalyses pyridoxine 5'-phosphate + O2 = pyridoxal 5'-phosphate + H2O2. Its pathway is cofactor metabolism; pyridoxal 5'-phosphate salvage; pyridoxal 5'-phosphate from pyridoxamine 5'-phosphate: step 1/1. The protein operates within cofactor metabolism; pyridoxal 5'-phosphate salvage; pyridoxal 5'-phosphate from pyridoxine 5'-phosphate: step 1/1. Functionally, catalyzes the oxidation of either pyridoxine 5'-phosphate (PNP) or pyridoxamine 5'-phosphate (PMP) into pyridoxal 5'-phosphate (PLP). The protein is Pyridoxine/pyridoxamine 5'-phosphate oxidase of Porphyromonas gingivalis (strain ATCC 33277 / DSM 20709 / CIP 103683 / JCM 12257 / NCTC 11834 / 2561).